The sequence spans 188 residues: GPI-anchored hemophore ARB_01017 (188 aa).

Residues 1–17 form the signal peptide; sequence MKLSVVALAALVSVAAA. The CFEM domain occupies 18–107; that stretch reads QGVSELPKCA…SSSSGSASST (90 aa). 4 disulfide bridges follow: cysteine 26-cysteine 64, cysteine 30-cysteine 59, cysteine 39-cysteine 45, and cysteine 47-cysteine 80. Aspartate 42 is a binding site for heme. The segment at 95–163 is disordered; that stretch reads TGGSSSSGSA…ATSTGAPTQT (69 aa). Asparagine 165 carries GPI-anchor amidated asparagine lipidation. The propeptide at 166–188 is removed in mature form; sequence AAASVNANGGLLAAIAALVIAVA.

The protein belongs to the RBT5 family. The GPI-anchor is attached to the protein in the endoplasmic reticulum and serves to target the protein to the cell surface. There, the glucosamine-inositol phospholipid moiety is cleaved off and the GPI-modified mannoprotein is covalently attached via its lipidless GPI glycan remnant to the 1,6-beta-glucan of the outer cell wall layer.

It is found in the secreted. The protein localises to the cell wall. It localises to the cell membrane. Its function is as follows. GPI-anchored cell wall protein involved in stabilizing the cell wall. In Arthroderma benhamiae (strain ATCC MYA-4681 / CBS 112371) (Trichophyton mentagrophytes), this protein is GPI-anchored hemophore ARB_01017.